The primary structure comprises 102 residues: PqqA binding protein (102 aa).

It belongs to the PqqD family. Monomer. Interacts with PqqE.

Its pathway is cofactor biosynthesis; pyrroloquinoline quinone biosynthesis. Functions as a PqqA binding protein and presents PqqA to PqqE, in the pyrroloquinoline quinone (PQQ) biosynthetic pathway. In Rhodopseudomonas palustris (strain BisB5), this protein is PqqA binding protein.